The following is a 449-amino-acid chain: UDP-N-acetylmuramate--L-alanine ligase (449 aa).

G113–T119 is a binding site for ATP.

Belongs to the MurCDEF family.

It is found in the cytoplasm. It catalyses the reaction UDP-N-acetyl-alpha-D-muramate + L-alanine + ATP = UDP-N-acetyl-alpha-D-muramoyl-L-alanine + ADP + phosphate + H(+). Its pathway is cell wall biogenesis; peptidoglycan biosynthesis. In terms of biological role, cell wall formation. The chain is UDP-N-acetylmuramate--L-alanine ligase from Hydrogenobaculum sp. (strain Y04AAS1).